The sequence spans 400 residues: Nicotinate phosphoribosyltransferase (400 aa).

A Phosphohistidine; by autocatalysis modification is found at H220.

Belongs to the NAPRTase family. Transiently phosphorylated on a His residue during the reaction cycle. Phosphorylation strongly increases the affinity for substrates and increases the rate of nicotinate D-ribonucleotide production. Dephosphorylation regenerates the low-affinity form of the enzyme, leading to product release.

The enzyme catalyses nicotinate + 5-phospho-alpha-D-ribose 1-diphosphate + ATP + H2O = nicotinate beta-D-ribonucleotide + ADP + phosphate + diphosphate. The protein operates within cofactor biosynthesis; NAD(+) biosynthesis; nicotinate D-ribonucleotide from nicotinate: step 1/1. Its function is as follows. Catalyzes the synthesis of beta-nicotinate D-ribonucleotide from nicotinate and 5-phospho-D-ribose 1-phosphate at the expense of ATP. This is Nicotinate phosphoribosyltransferase from Salmonella agona (strain SL483).